The primary structure comprises 427 residues: Adenylosuccinate synthetase (427 aa).

GTP-binding positions include 12 to 18 (GDEGKGK) and 40 to 42 (GHT). D13 (proton acceptor) is an active-site residue. Residues D13 and G40 each coordinate Mg(2+). IMP contacts are provided by residues 13–16 (DEGK), 38–41 (NAGH), T127, R141, Q222, T237, and R301. H41 functions as the Proton donor in the catalytic mechanism. 297 to 303 (VVTKRPR) is a substrate binding site. GTP contacts are provided by residues R303, 329–331 (SLD), and 411–413 (AVG).

This sequence belongs to the adenylosuccinate synthetase family. In terms of assembly, homodimer. Mg(2+) is required as a cofactor.

The protein resides in the cytoplasm. It catalyses the reaction IMP + L-aspartate + GTP = N(6)-(1,2-dicarboxyethyl)-AMP + GDP + phosphate + 2 H(+). Its pathway is purine metabolism; AMP biosynthesis via de novo pathway; AMP from IMP: step 1/2. Functionally, plays an important role in the de novo pathway of purine nucleotide biosynthesis. Catalyzes the first committed step in the biosynthesis of AMP from IMP. The chain is Adenylosuccinate synthetase from Leuconostoc citreum (strain KM20).